The following is a 534-amino-acid chain: UDP-glucuronosyltransferase 1A3 (534 aa).

A signal peptide spans 1-28; the sequence is MATGLQVPLPWLATGLLLLLSVQPWAES. 4 N-linked (GlcNAc...) asparagine glycosylation sites follow: Asn119, Asn142, Asn296, and Asn348. A helical transmembrane segment spans residues 492 to 508; sequence VIGFLLAVVLTVAFITF.

The protein belongs to the UDP-glycosyltransferase family. Homodimer. Homooligomer. Interacts with UGT1A1, UGT1A4, UGT1A6, UGT1A7, UGT1A8, UGT1A9 and UGT1A10 to form heterodimers. Isoform 1 interacts with isoform 2/i2 suggesting that oligomerization is involved in negative regulation of transferase activity by isoform 2. Isoform 1 also interacts with respective i2 isoforms of UGT1A1, UGT1A4, UGT1A6, UGT1A7, UGT1A8, UGT1A9 and UGT1A10. Expressed in liver, kidney, colon, esophagus and small intestine. In terms of tissue distribution, expressed in liver, kidney and colon. Not expressed in esophagus and small intestine.

The protein resides in the endoplasmic reticulum membrane. The enzyme catalyses glucuronate acceptor + UDP-alpha-D-glucuronate = acceptor beta-D-glucuronoside + UDP + H(+). The catalysed reaction is 17beta-estradiol + UDP-alpha-D-glucuronate = 17beta-estradiol 3-O-(beta-D-glucuronate) + UDP + H(+). It carries out the reaction 17beta-estradiol + UDP-alpha-D-glucuronate = 17beta-estradiol 17-O-(beta-D-glucuronate) + UDP + H(+). It catalyses the reaction 17alpha-estradiol + UDP-alpha-D-glucuronate = 17alpha-estradiol 3-O-(beta-D-glucuronate) + UDP + H(+). The enzyme catalyses estrone + UDP-alpha-D-glucuronate = estrone 3-O-(beta-D-glucuronate) + UDP + H(+). The catalysed reaction is chenodeoxycholate + UDP-alpha-D-glucuronate = chenodeoxycholoyl-24-O-(beta-D-glucuronate) + UDP. It carries out the reaction deoxycholate + UDP-alpha-D-glucuronate = deoxycholoyl-24-O-(beta-D-glucuronate) + UDP. It catalyses the reaction lithocholate + UDP-alpha-D-glucuronate = lithocholoyl-24-O-(beta-D-glucuronate) + UDP. The enzyme catalyses hyodeoxycholate + UDP-alpha-D-glucuronate = hyodeoxycholoyl-24-O-(beta-D-glucuronate) + UDP. The catalysed reaction is hyocholate + UDP-alpha-D-glucuronate = hyocholoyl-24-O-(beta-D-glucuronate) + UDP. It carries out the reaction calcidiol + UDP-alpha-D-glucuronate = calcidiol 25-O-(beta-D-glucuronide) + UDP + H(+). It catalyses the reaction (E)-ferulate + UDP-alpha-D-glucuronate = (E)-4-O-(beta-D-glucuronosyl)-ferulate + UDP + H(+). The enzyme catalyses (E)-ferulate + UDP-alpha-D-glucuronate = (E)-ferulic acid beta-D-glucuronate ester + UDP. The catalysed reaction is losartan + UDP-alpha-D-glucuronate = losartan-2-N-beta-D-glucuronide + UDP. It carries out the reaction candesartan + UDP-alpha-D-glucuronate = candesartan-2-N-beta-D-glucuronide + UDP. It catalyses the reaction zolasartan + UDP-alpha-D-glucuronate = zolarsartan-2-N-beta-D-glucuronide + UDP. In terms of biological role, UDP-glucuronosyltransferase (UGT) that catalyzes phase II biotransformation reactions in which lipophilic substrates are conjugated with glucuronic acid to increase the metabolite's water solubility, thereby facilitating excretion into either the urine or bile. Essential for the elimination and detoxification of drugs, xenobiotics and endogenous compounds. Catalyzes the glucuronidation of endogenous estrogen hormones such as estradiol and estrone. Contributes to bile acid (BA) detoxification by catalyzing the glucuronidation of BA substrates, which are natural detergents for dietary lipids absorption. Involved in the glucuronidation of calcidiol, which is the major circulating form of vitamin D3, essential for the regulation of calcium and phosphate homeostasis. Involved in the glucuronidation of the phytochemical ferulic acid at the phenolic or the carboxylic acid group. Involved in the glucuronidation of the AGTR1 angiotensin receptor antagonists losartan, candesartan and zolarsartan, which can inhibit the effect of angiotensin II. Functionally, lacks UDP-glucuronosyltransferase (UGT) activity but acts as a negative regulator of isoform 1. The sequence is that of UDP-glucuronosyltransferase 1A3 from Homo sapiens (Human).